Consider the following 422-residue polypeptide: Synaptotagmin-1 (422 aa).

Topologically, residues 1 to 57 (MVSESHHEALAAPPVTTVATVLPSNATEPASPGEGKEDAFSKLKEKFMNELHKIPLP) are vesicular. N-linked (GlcNAc...) asparagine glycosylation is present at N25. Residues 58–80 (PWALIAIAIVAVLLVLTCCFCIC) traverse the membrane as a helical segment. S-palmitoyl cysteine attachment occurs at residues C75, C76, C78, C80, and C83. Topologically, residues 81–422 (KKCLFKKKNK…EVDAMLAVKK (342 aa)) are cytoplasmic. The disordered stretch occupies residues 113-142 (TMKDQALKDDDAETGLTDGEEKEEPKEEEK). Positions 122–134 (DDAETGLTDGEEK) are enriched in acidic residues. Residue T129 is modified to Phosphothreonine. The tract at residues 136 to 382 (EPKEEEKLGK…AIGKVFVGYN (247 aa)) is phospholipid binding. Residues 142-261 (KLGKLQYSLD…DFGHVTEEWR (120 aa)) form the C2 1 domain. Positions 172, 173, and 179 each coordinate Ca(2+). Y230 is subject to Phosphotyrosine. The Ca(2+) site is built by D231, F232, D233, S236, K237, and D239. S265 carries the post-translational modification Phosphoserine. One can recognise a C2 2 domain in the interval 273–406 (KLGDICFSLR…NPRRPIAQWH (134 aa)). Ca(2+)-binding residues include D304 and D310. Residues S343 and S345 each carry the phosphoserine modification. Ca(2+) is bound by residues D364, D366, and D372.

Belongs to the synaptotagmin family. In terms of assembly, homotetramer. Heterodimer; heterodimerizes with SYT2 in presence of calcium. Interacts with SCAMP5. Interacts with STON2. Forms a complex with SV2B, syntaxin 1 and SNAP25. Interacts with SV2A, SV2B and SV2C. Interacts with RIMS1. Interacts with PRRT2. Interacts with DNAJC5 in a phosphorylation-dependent manner. Interacts (via N-terminus) with RAB3A. Interacts with SYT12. Interacts with calmodulin. Interacts with DNM1 (via C-terminal proline-rich domain (PRD)); this interaction facilitates vesicle fission during clathrin-mediated endocytosis (CME). The cofactor is Ca(2+). Post-translationally, glycosylated. Expressed in melanocytes.

The protein resides in the cytoplasmic vesicle. It localises to the secretory vesicle membrane. It is found in the secretory vesicle. The protein localises to the synaptic vesicle membrane. Its subcellular location is the chromaffin granule membrane. The protein resides in the cytoplasm. Functionally, calcium sensor that participates in triggering neurotransmitter release at the synapse. May have a regulatory role in the membrane interactions during trafficking of synaptic vesicles at the active zone of the synapse. It binds acidic phospholipids with a specificity that requires the presence of both an acidic head group and a diacyl backbone. A Ca(2+)-dependent interaction between synaptotagmin and putative receptors for activated protein kinase C has also been reported. It can bind to at least three additional proteins in a Ca(2+)-independent manner; these are neurexins, syntaxin and AP2. Plays a role in dendrite formation by melanocytes. This Homo sapiens (Human) protein is Synaptotagmin-1.